Consider the following 369-residue polypeptide: Lipoyl synthase, mitochondrial (369 aa).

Residues 1–32 constitute a mitochondrion transit peptide; it reads MLTKGVRALAWSPRRYITLDAEAAKPVVAKRR. The [4Fe-4S] cluster site is built by cysteine 106, cysteine 111, cysteine 117, cysteine 136, cysteine 140, cysteine 143, and serine 351. The 220-residue stretch at 121 to 340 folds into the Radical SAM core domain; that stretch reads NKGSATATIM…KEKALELGFL (220 aa).

It belongs to the radical SAM superfamily. Lipoyl synthase family. The cofactor is [4Fe-4S] cluster.

Its subcellular location is the mitochondrion. It carries out the reaction [[Fe-S] cluster scaffold protein carrying a second [4Fe-4S](2+) cluster] + N(6)-octanoyl-L-lysyl-[protein] + 2 oxidized [2Fe-2S]-[ferredoxin] + 2 S-adenosyl-L-methionine + 4 H(+) = [[Fe-S] cluster scaffold protein] + N(6)-[(R)-dihydrolipoyl]-L-lysyl-[protein] + 4 Fe(3+) + 2 hydrogen sulfide + 2 5'-deoxyadenosine + 2 L-methionine + 2 reduced [2Fe-2S]-[ferredoxin]. It participates in protein modification; protein lipoylation via endogenous pathway; protein N(6)-(lipoyl)lysine from octanoyl-[acyl-carrier-protein]: step 2/2. Catalyzes the radical-mediated insertion of two sulfur atoms into the C-6 and C-8 positions of the octanoyl moiety bound to the lipoyl domains of lipoate-dependent enzymes, thereby converting the octanoylated domains into lipoylated derivatives. This Eremothecium gossypii (strain ATCC 10895 / CBS 109.51 / FGSC 9923 / NRRL Y-1056) (Yeast) protein is Lipoyl synthase, mitochondrial.